Consider the following 733-residue polypeptide: Protein OBERON 3 (733 aa).

Residues 1-15 (MIGEKDLAGDGECSR) are compositionally biased toward basic and acidic residues. 2 disordered regions span residues 1-42 (MIGE…YHQK) and 118-142 (NPNS…KKSN). Polar residues predominate over residues 21–30 (PRFSNLNNQT). The stretch at 120–153 (NSSKRKAHEEEEEAEEEEDKKSNKIETLNLSLAL) forms a coiled coil. The segment at 436 to 500 (SCMCPVCLRF…MFHCIGCAHK (65 aa)) adopts a PHD-type zinc-finger fold. The disordered stretch occupies residues 592-614 (VAAETSYRKDEASVTPSTSKDQK). Positions 644-733 (MFQKKADEAR…RMEVTRQQLV (90 aa)) form a coiled coil.

Self-interacts. Interacts with OBE1 and OBE2. Interacts with OBE4.

It is found in the nucleus. Functionally, probable transcription factor that functions redundantly with OBE4 in specification of the hypophysis and establishment of the embryonic root. Involved in the activation of ARF5/MP-dependent gene expression during embryonic root meristem initiation. Involved in shoot meristem homeostasis. The protein is Protein OBERON 3 of Arabidopsis thaliana (Mouse-ear cress).